A 328-amino-acid chain; its full sequence is Glycerol-3-phosphate dehydrogenase [NAD(P)+] (328 aa).

NADPH-binding residues include Trp11, Arg30, and Lys103. Sn-glycerol 3-phosphate is bound by residues Lys103, Gly132, and Ser134. Ala136 serves as a coordination point for NADPH. 5 residues coordinate sn-glycerol 3-phosphate: Lys187, Asp240, Ser250, Arg251, and Asn252. Lys187 acts as the Proton acceptor in catalysis. Arg251 is an NADPH binding site. Residues Val275 and Glu277 each coordinate NADPH.

Belongs to the NAD-dependent glycerol-3-phosphate dehydrogenase family.

The protein resides in the cytoplasm. It catalyses the reaction sn-glycerol 3-phosphate + NAD(+) = dihydroxyacetone phosphate + NADH + H(+). The enzyme catalyses sn-glycerol 3-phosphate + NADP(+) = dihydroxyacetone phosphate + NADPH + H(+). The protein operates within membrane lipid metabolism; glycerophospholipid metabolism. In terms of biological role, catalyzes the reduction of the glycolytic intermediate dihydroxyacetone phosphate (DHAP) to sn-glycerol 3-phosphate (G3P), the key precursor for phospholipid synthesis. The protein is Glycerol-3-phosphate dehydrogenase [NAD(P)+] of Aromatoleum aromaticum (strain DSM 19018 / LMG 30748 / EbN1) (Azoarcus sp. (strain EbN1)).